The sequence spans 69 residues: MKQGIHPEYHTDAVVKCACGNSFTTGSVKEELKVEICSKCHPFFTGKQKIVDVGGRVEKFNKRFNLDTK.

4 residues coordinate Zn(2+): Cys-17, Cys-19, Cys-37, and Cys-40.

This sequence belongs to the bacterial ribosomal protein bL31 family. Type A subfamily. Part of the 50S ribosomal subunit. Zn(2+) is required as a cofactor.

In terms of biological role, binds the 23S rRNA. The sequence is that of Large ribosomal subunit protein bL31 from Clostridium botulinum (strain Eklund 17B / Type B).